Reading from the N-terminus, the 468-residue chain is MSKQQIGVVGMAVMGRNLALNIESRGYTVSVFNRSREKTEEVIAENPGKKLVPYYTVQEFVESLETPRRILLMVKAGSGTDSAIDSLKPYLDKGDIIIDGGNTFFQDTIRRNRELSAEGFNFIGTGVSGGEEGALKGPSIMPGGQKEAYELVAPILKQIAAVAEDGEPCVTYIGADGAGHYVKMVHNGIEYGDMQLIAEAYALLKGGLTLSNEELAQTFTEWNEGELSSYLYDITKDIFTKKDEEGKYLVDVILDEAANKGTGKWTSQSSLDLGEPLSLITESVFPRYISSLKDQRVAASKVLSGPQAQPAGDKAEFIEKVRRALYLGKIVSYAQGFSQLRAASDEYNWELNYAEIAKIFRAGCIIRAQFLQKITDAYAQNAGIANLLLAPYFKQIADDYQQALRDVVAYAVQNGIRVPTFSAAIAYYDSYRSAVLPANLIQAQRDYFGAHTYKRTDKEGVFHTEWLE.

Residues 10–15, 33–35, 74–76, and Asn102 contribute to the NADP(+) site; these read GMAVMG, NRS, and VKA. Substrate is bound by residues Asn102 and 128–130; that span reads SGG. Lys183 functions as the Proton acceptor in the catalytic mechanism. 186 to 187 contributes to the substrate binding site; that stretch reads HN. Glu190 serves as the catalytic Proton donor. Substrate-binding residues include Tyr191, Lys260, Arg287, Arg445, and His451.

The protein belongs to the 6-phosphogluconate dehydrogenase family. Homodimer.

It catalyses the reaction 6-phospho-D-gluconate + NADP(+) = D-ribulose 5-phosphate + CO2 + NADPH. Its pathway is carbohydrate degradation; pentose phosphate pathway; D-ribulose 5-phosphate from D-glucose 6-phosphate (oxidative stage): step 3/3. In terms of biological role, catalyzes the oxidative decarboxylation of 6-phosphogluconate to ribulose 5-phosphate and CO(2), with concomitant reduction of NADP to NADPH. This chain is 6-phosphogluconate dehydrogenase, decarboxylating (gnd), found in Escherichia coli.